The following is a 437-amino-acid chain: Enolase (437 aa).

Gln162 is a binding site for (2R)-2-phosphoglycerate. The Proton donor role is filled by Glu204. The Mg(2+) site is built by Asp251, Glu297, and Asp324. Positions 349, 378, 379, and 400 each coordinate (2R)-2-phosphoglycerate. The Proton acceptor role is filled by Lys349.

This sequence belongs to the enolase family. Requires Mg(2+) as cofactor.

The protein localises to the cytoplasm. The protein resides in the secreted. Its subcellular location is the cell surface. The catalysed reaction is (2R)-2-phosphoglycerate = phosphoenolpyruvate + H2O. It participates in carbohydrate degradation; glycolysis; pyruvate from D-glyceraldehyde 3-phosphate: step 4/5. Catalyzes the reversible conversion of 2-phosphoglycerate (2-PG) into phosphoenolpyruvate (PEP). It is essential for the degradation of carbohydrates via glycolysis. The sequence is that of Enolase from Chlorobium phaeobacteroides (strain DSM 266 / SMG 266 / 2430).